A 179-amino-acid polypeptide reads, in one-letter code: Large ribosomal subunit protein uL6 (179 aa).

The protein belongs to the universal ribosomal protein uL6 family. In terms of assembly, part of the 50S ribosomal subunit.

Its function is as follows. This protein binds to the 23S rRNA, and is important in its secondary structure. It is located near the subunit interface in the base of the L7/L12 stalk, and near the tRNA binding site of the peptidyltransferase center. The sequence is that of Large ribosomal subunit protein uL6 from Geotalea daltonii (strain DSM 22248 / JCM 15807 / FRC-32) (Geobacter daltonii).